Consider the following 762-residue polypeptide: Cell surface protein (762 aa).

The N-terminal stretch at 1 to 26 (MKNLKKLIAVVSTFALVFSAMAVGFA) is a signal peptide. SLH domains lie at 27–90 (ATTP…EMAK), 92–155 (EKSA…WPYG), and 156–204 (YLAK…KEVL). Tyrosine 297, tyrosine 516, tyrosine 520, and tyrosine 632 each carry an O-linked (Glc...) tyrosine glycan.

Post-translationally, glycosylated; contains 8% carbohydrates, which correspond to about 40 to 50 sugar molecules per monomer. O-linked glycans consist of Glc, GalNAc and GlcNAc.

Its subcellular location is the secreted. The protein localises to the cell wall. The protein resides in the S-layer. Functionally, the S-layer is a paracrystalline mono-layered assembly of proteins which coat the surface of bacteria. In Thermoanaerobacter kivui (Acetogenium kivui), this protein is Cell surface protein.